Consider the following 355-residue polypeptide: UDP-N-acetylglucosamine--N-acetylmuramyl-(pentapeptide) pyrophosphoryl-undecaprenol N-acetylglucosamine transferase (355 aa).

Residues Thr7–Gly9, Asn119, Arg159, Ser187, Ile241, and Gln286 contribute to the UDP-N-acetyl-alpha-D-glucosamine site.

The protein belongs to the glycosyltransferase 28 family. MurG subfamily.

It localises to the cell inner membrane. It carries out the reaction di-trans,octa-cis-undecaprenyl diphospho-N-acetyl-alpha-D-muramoyl-L-alanyl-D-glutamyl-meso-2,6-diaminopimeloyl-D-alanyl-D-alanine + UDP-N-acetyl-alpha-D-glucosamine = di-trans,octa-cis-undecaprenyl diphospho-[N-acetyl-alpha-D-glucosaminyl-(1-&gt;4)]-N-acetyl-alpha-D-muramoyl-L-alanyl-D-glutamyl-meso-2,6-diaminopimeloyl-D-alanyl-D-alanine + UDP + H(+). It participates in cell wall biogenesis; peptidoglycan biosynthesis. Its function is as follows. Cell wall formation. Catalyzes the transfer of a GlcNAc subunit on undecaprenyl-pyrophosphoryl-MurNAc-pentapeptide (lipid intermediate I) to form undecaprenyl-pyrophosphoryl-MurNAc-(pentapeptide)GlcNAc (lipid intermediate II). The sequence is that of UDP-N-acetylglucosamine--N-acetylmuramyl-(pentapeptide) pyrophosphoryl-undecaprenol N-acetylglucosamine transferase from Nitrosomonas eutropha (strain DSM 101675 / C91 / Nm57).